A 394-amino-acid polypeptide reads, in one-letter code: Elongation factor Tu (394 aa).

Positions 10 to 204 (KPHVNVGTIG…ALDSYIPEPQ (195 aa)) constitute a tr-type G domain. The interval 19–26 (GHVDHGKT) is G1. A GTP-binding site is contributed by 19–26 (GHVDHGKT). Thr-26 serves as a coordination point for Mg(2+). Residues 60–64 (GITIN) form a G2 region. The G3 stretch occupies residues 81–84 (DCPG). GTP-binding positions include 81-85 (DCPGH) and 136-139 (NKCD). The interval 136 to 139 (NKCD) is G4. The G5 stretch occupies residues 174–176 (SAL).

The protein belongs to the TRAFAC class translation factor GTPase superfamily. Classic translation factor GTPase family. EF-Tu/EF-1A subfamily. In terms of assembly, monomer.

The protein resides in the cytoplasm. The enzyme catalyses GTP + H2O = GDP + phosphate + H(+). In terms of biological role, GTP hydrolase that promotes the GTP-dependent binding of aminoacyl-tRNA to the A-site of ribosomes during protein biosynthesis. In Shewanella baltica (strain OS185), this protein is Elongation factor Tu.